The following is a 335-amino-acid chain: Lipoyl synthase (335 aa).

Positions 55, 60, 66, 81, 85, 88, and 292 each coordinate [4Fe-4S] cluster. The 215-residue stretch at 67-281 folds into the Radical SAM core domain; the sequence is WEDREATFLI…SKAAEEIGFL (215 aa).

It belongs to the radical SAM superfamily. Lipoyl synthase family. [4Fe-4S] cluster is required as a cofactor.

It localises to the cytoplasm. It catalyses the reaction [[Fe-S] cluster scaffold protein carrying a second [4Fe-4S](2+) cluster] + N(6)-octanoyl-L-lysyl-[protein] + 2 oxidized [2Fe-2S]-[ferredoxin] + 2 S-adenosyl-L-methionine + 4 H(+) = [[Fe-S] cluster scaffold protein] + N(6)-[(R)-dihydrolipoyl]-L-lysyl-[protein] + 4 Fe(3+) + 2 hydrogen sulfide + 2 5'-deoxyadenosine + 2 L-methionine + 2 reduced [2Fe-2S]-[ferredoxin]. It participates in protein modification; protein lipoylation via endogenous pathway; protein N(6)-(lipoyl)lysine from octanoyl-[acyl-carrier-protein]: step 2/2. In terms of biological role, catalyzes the radical-mediated insertion of two sulfur atoms into the C-6 and C-8 positions of the octanoyl moiety bound to the lipoyl domains of lipoate-dependent enzymes, thereby converting the octanoylated domains into lipoylated derivatives. In Kocuria rhizophila (strain ATCC 9341 / DSM 348 / NBRC 103217 / DC2201), this protein is Lipoyl synthase.